Reading from the N-terminus, the 381-residue chain is tRNA pseudouridine synthase D (381 aa).

The active-site Nucleophile is D81. The TRUD domain occupies 160–335 (GMPNYFGPQR…TLGSRRFFWV (176 aa)).

The protein belongs to the pseudouridine synthase TruD family.

It carries out the reaction uridine(13) in tRNA = pseudouridine(13) in tRNA. In terms of biological role, responsible for synthesis of pseudouridine from uracil-13 in transfer RNAs. This Helicobacter pylori (strain Shi470) protein is tRNA pseudouridine synthase D.